The primary structure comprises 194 residues: uncharacterized protein (194 aa).

A signal peptide spans 1–15 (MFVLSIALLSCTTLC). The PAN domain occupies 49–134 (CPQGLHADAI…KATYYEKIRC (86 aa)). Cystine bridges form between C49-C134 and C79-C106.

This is an uncharacterized protein from Caenorhabditis elegans.